A 62-amino-acid chain; its full sequence is Sucrase-isomaltase, intestinal (62 aa).

At 2-12 (ARKKFSGLEIX) the chain is on the cytoplasmic side. Ser7 carries the phosphoserine; by PKA modification. Residues 13-32 (LIVLFAIVLSIAIALVVVXA) traverse the membrane as a helical; Signal-anchor for type II membrane protein segment. Topologically, residues 33 to 38 (SKXPAV) are lumenal. Position 59 is a sulfotyrosine (Tyr59).

The protein belongs to the glycosyl hydrolase 31 family. The resulting sucrase and isomaltase subunits stay associated with one another in a complex by non-covalent linkages. Post-translationally, the precursor is proteolytically cleaved when exposed to pancreatic proteases in the intestinal lumen. In terms of processing, sulfated.

The protein resides in the apical cell membrane. The catalysed reaction is Hydrolysis of sucrose and maltose by an alpha-D-glucosidase-type action.. The enzyme catalyses Hydrolysis of (1-&gt;6)-alpha-D-glucosidic linkages in some oligosaccharides produced from starch and glycogen by alpha-amylase, and in isomaltose.. In terms of biological role, plays an important role in the final stage of carbohydrate digestion. Isomaltase activity is specific for both alpha-1,4- and alpha-1,6-oligosaccharides. This Sus scrofa (Pig) protein is Sucrase-isomaltase, intestinal (SI).